A 165-amino-acid chain; its full sequence is Endoribonuclease YbeY (165 aa).

Residues H130, H134, and H140 each coordinate Zn(2+).

This sequence belongs to the endoribonuclease YbeY family. Zn(2+) serves as cofactor.

It is found in the cytoplasm. Single strand-specific metallo-endoribonuclease involved in late-stage 70S ribosome quality control and in maturation of the 3' terminus of the 16S rRNA. In Streptococcus agalactiae serotype Ia (strain ATCC 27591 / A909 / CDC SS700), this protein is Endoribonuclease YbeY.